A 358-amino-acid chain; its full sequence is Dynein axonemal assembly factor 10 (358 aa).

6 WD repeats span residues E64–Y106, N116–V155, E163–E206, N208–G250, A258–K298, and L320–V358.

Interacts with PIH1D1; the interaction associates DNAAF10 with the R2TP complex. Interacts with several dynein axonemal assembly factors.

It is found in the dynein axonemal particle. Key assembly factor specifically required for the stability of axonemal dynein heavy chains in cytoplasm. The polypeptide is Dynein axonemal assembly factor 10 (dnaaf10) (Danio rerio (Zebrafish)).